The following is a 207-amino-acid chain: Small ribosomal subunit protein uS4c (207 aa).

The region spanning 92 to 156 (MRLDNILFRL…YQSIITKRIE (65 aa)) is the S4 RNA-binding domain.

This sequence belongs to the universal ribosomal protein uS4 family. As to quaternary structure, part of the 30S ribosomal subunit. Contacts protein S5. The interaction surface between S4 and S5 is involved in control of translational fidelity.

Its subcellular location is the plastid. The protein resides in the chloroplast. Functionally, one of the primary rRNA binding proteins, it binds directly to 16S rRNA where it nucleates assembly of the body of the 30S subunit. With S5 and S12 plays an important role in translational accuracy. In Equisetum pratense (Meadow horsetail), this protein is Small ribosomal subunit protein uS4c (rps4).